A 328-amino-acid polypeptide reads, in one-letter code: Carbonic anhydrase-related protein 11 (328 aa).

The first 22 residues, 1 to 22, serve as a signal peptide directing secretion; sequence MGAAARLSAPRALVLWAALGAA. The Alpha-carbonic anhydrase domain maps to 33-303; sequence DWWSYKDNLQ…LAHRALRGNR (271 aa). Asn-118, Asn-170, and Asn-260 each carry an N-linked (GlcNAc...) asparagine glycan. The interval 300–328 is disordered; sequence RGNRDPRHPERRCRGPNYRLHVDGAPHGR. Positions 319–328 are enriched in basic and acidic residues; it reads LHVDGAPHGR.

Belongs to the alpha-carbonic anhydrase family.

It is found in the secreted. Functionally, does not have a catalytic activity. The protein is Carbonic anhydrase-related protein 11 (CA11) of Bos taurus (Bovine).